A 462-amino-acid polypeptide reads, in one-letter code: Citrate synthase, mitochondrial (462 aa).

The transit peptide at 1 to 21 (MRSINQLLKQASLSQKSQYNF) directs the protein to the mitochondrion. Active-site residues include His-300, His-346, and Asp-401.

The protein belongs to the citrate synthase family. Homodimer.

The protein resides in the mitochondrion matrix. It localises to the cytoplasm. It is found in the cytoskeleton. The enzyme catalyses oxaloacetate + acetyl-CoA + H2O = citrate + CoA + H(+). It participates in carbohydrate metabolism; tricarboxylic acid cycle; isocitrate from oxaloacetate: step 1/2. In terms of biological role, structural protein involved in oral morphogenesis and in pronuclear behavior during conjugation. Respiratory enzyme. The chain is Citrate synthase, mitochondrial from Tetrahymena thermophila.